Reading from the N-terminus, the 161-residue chain is Nucleotide-binding protein HCH_04620 (161 aa).

The protein belongs to the YajQ family.

Functionally, nucleotide-binding protein. The chain is Nucleotide-binding protein HCH_04620 from Hahella chejuensis (strain KCTC 2396).